The following is a 172-amino-acid chain: Adenylate kinase isoenzyme 6 (172 aa).

ATP is bound by residues Gly13, Gly15, Lys16, Thr17, and Thr18. Positions Asn33–Leu56 are NMPbind. Residues Thr108 to Asp118 form an LID region. Residues Arg109 and Lys148 each coordinate ATP.

It belongs to the adenylate kinase family. AK6 subfamily. In terms of assembly, monomer and homodimer. Interacts with small ribosomal subunit protein uS11. Not a structural component of 43S pre-ribosomes, but transiently interacts with them by binding to uS11. Interacts with COIL (via C-terminus).

It localises to the cytoplasm. The protein localises to the nucleus. The protein resides in the nucleoplasm. Its subcellular location is the cajal body. It carries out the reaction AMP + ATP = 2 ADP. It catalyses the reaction ATP + H2O = ADP + phosphate + H(+). In terms of biological role, broad-specificity nucleoside monophosphate (NMP) kinase that catalyzes the reversible transfer of the terminal phosphate group between nucleoside triphosphates and monophosphates. Also has ATPase activity. Involved in the late cytoplasmic maturation steps of the 40S ribosomal particles, specifically 18S rRNA maturation. While NMP activity is not required for ribosome maturation, ATPase activity is. Associates transiently with small ribosomal subunit protein uS11. ATP hydrolysis breaks the interaction with uS11. May temporarily remove uS11 from the ribosome to enable a conformational change of the ribosomal RNA that is needed for the final maturation step of the small ribosomal subunit. Its NMP activity may have a role in nuclear energy homeostasis. May be involved in regulation of Cajal body (CB) formation. The sequence is that of Adenylate kinase isoenzyme 6 from Oryctolagus cuniculus (Rabbit).